The primary structure comprises 394 residues: Xylose isomerase (394 aa).

Active-site residues include His-54 and Asp-57. Mg(2+)-binding residues include Glu-181, Glu-217, His-220, Asp-245, Asp-255, Asp-257, and Asp-292.

Belongs to the xylose isomerase family. In terms of assembly, homotetramer. The cofactor is Mg(2+).

Its subcellular location is the cytoplasm. The enzyme catalyses alpha-D-xylose = alpha-D-xylulofuranose. The protein is Xylose isomerase (xylA) of Actinoplanes sp. (strain ATCC 31351 / 3876) (Ampullariella sp.).